Reading from the N-terminus, the 377-residue chain is MTLDLIKIRRDLHQIPEIGLEEFKTQAYLLERIAEMTEGKDFVEQRTWRTGILVFLHGSAPEKTIGWRTDIDGLPIVEETGLDFKSIHEGRMHACGHDIHMTTALGLLDQMLQVQPKNNMLFLFQPAEENEAGGMLMYEDGAFGDWLPDEFYGLHVRPDFKVGDIATNTNTLFAGTCEVLVTFKGKGGHAAFPHEANDALVAASYFITQVQTIVSRNVDPIQGGVVTFGSFHAGTTNNVIAETAEVYGTIRTLTQEMSLLIQKRVRQIAEGVAASFGMEVDIMLKQGGYLPVENNPALAKELMAFFDASPMVNLIDCLPAMTGEDFGYLLSKVPGVMFWLGIDTPYALHHPKMSPNEEALAFAVSEIGKFLKYKAED.

The active site involves aspartate 70. Glutamate 129 (proton acceptor) is an active-site residue.

The protein belongs to the peptidase M20A family. N-acetyldiaminopimelate deacetylase subfamily.

It carries out the reaction N-acetyl-(2S,6S)-2,6-diaminopimelate + H2O = (2S,6S)-2,6-diaminopimelate + acetate. It participates in amino-acid biosynthesis; L-lysine biosynthesis via DAP pathway; LL-2,6-diaminopimelate from (S)-tetrahydrodipicolinate (acetylase route): step 3/3. Catalyzes the conversion of N-acetyl-diaminopimelate to diaminopimelate and acetate. The protein is N-acetyldiaminopimelate deacetylase of Streptococcus thermophilus (strain ATCC BAA-491 / LMD-9).